Reading from the N-terminus, the 439-residue chain is Homogentisate 1,2-dioxygenase (439 aa).

Residue His293 is the Proton acceptor of the active site. 2 residues coordinate Fe cation: His336 and Glu342. Residues Tyr351 and His372 each coordinate homogentisate. His372 is a binding site for Fe cation.

It belongs to the homogentisate dioxygenase family. In terms of assembly, hexamer; dimer of trimers. Fe cation is required as a cofactor.

The enzyme catalyses homogentisate + O2 = 4-maleylacetoacetate + H(+). It participates in amino-acid degradation; L-phenylalanine degradation; acetoacetate and fumarate from L-phenylalanine: step 4/6. Functionally, involved in the catabolism of homogentisate (2,5-dihydroxyphenylacetate or 2,5-OH-PhAc), a central intermediate in the degradation of phenylalanine and tyrosine. Catalyzes the oxidative ring cleavage of the aromatic ring of homogentisate to yield maleylacetoacetate. This chain is Homogentisate 1,2-dioxygenase, found in Cupriavidus pinatubonensis (strain JMP 134 / LMG 1197) (Cupriavidus necator (strain JMP 134)).